A 170-amino-acid chain; its full sequence is Histone H1.9 (170 aa).

An H15 domain is found at 34 to 108 (RKPTMSYVIL…GASGSLCLCK (75 aa)). Position 56 is a phosphoserine (S56). The tract at residues 118–140 (AKRCQDRQKSQKPQKPGQRESEP) is disordered.

The protein belongs to the histone H1/H5 family. In terms of tissue distribution, expressed exclusively in the testis by haploid germ cells (at protein level).

Its subcellular location is the nucleus. The protein resides in the chromosome. Functionally, DNA-binding protein that may be implicated in chromatin remodeling and/or transcriptional regulation during spermiogenesis, the process of spermatid maturation into spermatozoa. The polypeptide is Histone H1.9 (Mus musculus (Mouse)).